A 716-amino-acid chain; its full sequence is MAKMRVYEYAKAINVSSKEILTALKNMDIVVNNHMAMLEEKTIKQLDAKFKKGGAGVTSQKPAETNKNKPQGINQQPAGNQPNKIRDGKKNDVQNNQFNKNKKNNNNNKNKNKRNHNNKNQYQQKPLKPKKELPEKITFSGSLTVGALAEELGKEPSELIKKLMLLGVMATINQELDKDTIELIASEYGVETEEVIVLEETELEKYEEADKEEDLQIRPPVVTIMGHVDHGKTTLLDSIRKTKVVEGEAGGITQHIGAYQIEENGKKITFLDTPGHAAFTTMRARGAEVTDITILVVAADDGVMPQTVEAINHAKAAEVPIIVAVNKVDKESANPDRVMQELTEYGLVPEAWGGETIFVPLSALTGKGIDELVEMILLVSEVEELKANPNRQAKGTVIEAELDKGRGSVATLLVQTGTLNVGDPIVVGNTFGRVRAMVNDLGRRVKTAGPSTPVEITGLNDVPQAGDQFLVFKDEKTARSVGEARASKQLEEQRSDKAKLSLDDLFEQIKQGDVKDINLIVKADVQGSAEALTAALQKIEVEGVKVKIIHTGVGAITESDIILASASNAIVIGFNVRPDGNAKSTAEAENVDIRLHRIIYKVIEEIEAAMKGMLDPEYEEKVIGQVEVRQTFKVSKIGTIAGGYVTDGHITRDSGLRLIRDGVVIFEGEVDVLKRFKDDVKEVSQGYECGITIKKYNDIREGDIIEAYVMQEIERK.

The disordered stretch occupies residues 53–135; it reads GGAGVTSQKP…PLKPKKELPE (83 aa). The span at 57 to 83 shows a compositional bias: polar residues; that stretch reads VTSQKPAETNKNKPQGINQQPAGNQPN. Residues 93–109 show a composition bias toward low complexity; the sequence is VQNNQFNKNKKNNNNNK. One can recognise a tr-type G domain in the interval 217–386; the sequence is IRPPVVTIMG…LLVSEVEELK (170 aa). The tract at residues 226–233 is G1; the sequence is GHVDHGKT. GTP is bound at residue 226–233; the sequence is GHVDHGKT. The segment at 251-255 is G2; the sequence is GITQH. The interval 272 to 275 is G3; sequence DTPG. Residues 272–276 and 326–329 contribute to the GTP site; these read DTPGH and NKVD. Residues 326–329 form a G4 region; the sequence is NKVD. A G5 region spans residues 362-364; sequence SAL.

This sequence belongs to the TRAFAC class translation factor GTPase superfamily. Classic translation factor GTPase family. IF-2 subfamily.

The protein localises to the cytoplasm. In terms of biological role, one of the essential components for the initiation of protein synthesis. Protects formylmethionyl-tRNA from spontaneous hydrolysis and promotes its binding to the 30S ribosomal subunits. Also involved in the hydrolysis of GTP during the formation of the 70S ribosomal complex. The protein is Translation initiation factor IF-2 of Bacillus velezensis (strain DSM 23117 / BGSC 10A6 / LMG 26770 / FZB42) (Bacillus amyloliquefaciens subsp. plantarum).